Consider the following 599-residue polypeptide: MRVSRLMLVTLRDIPADAEIASHQLLLRGGYIRRVTSGIYAYLPLMWRVLRKITSIVQEEMDATGALETLLPQLQPAELWRRSGRWQGYTAGEGLMFHLEDRQGRELGLGPTHEEVITSLAGDLLRSYRQLPVTLYQIQSKFRDEIRPRFGLMRGREFIMKDAYSFHSCEADLAMTYRAMDEAYQRIFSRCGLETVAVEADSGAIGGASSQEFMVTADAGEDLILISGDGHYAANQEKAVSHPPKAIPLPASKVALLDTPEQGTIETLCTAQGLVPSQVVKVLVMLARFEDGELQPVLVSIRGDQQLNEVKLINALSRELNKGVLDVAPISADQITAQKLEAWPFGAIGPDLDDALLSGATSWTKHFLRLADPTATELNCFVCGANQNNQHRTGMTWSKLGGVPKSVDLRKSQAGDRCIHDSSQILEERRGIEVGHIFQLGRKYSEALEACFTNDQGTQEPFWMGCYGIGISRLAQAAVEQHHDEAGMKWPLAIAPFEVIIVVANIQDEVQQKLAEQLYSELQAADIEALLDDRTERAGVKFKDADLIGIPWRVVVGRDAAKGQVELIQRSSRKVQILSAKQAFTALVKDIAANQNTRV.

It belongs to the class-II aminoacyl-tRNA synthetase family. ProS type 1 subfamily. In terms of assembly, homodimer.

It is found in the cytoplasm. The catalysed reaction is tRNA(Pro) + L-proline + ATP = L-prolyl-tRNA(Pro) + AMP + diphosphate. Catalyzes the attachment of proline to tRNA(Pro) in a two-step reaction: proline is first activated by ATP to form Pro-AMP and then transferred to the acceptor end of tRNA(Pro). As ProRS can inadvertently accommodate and process non-cognate amino acids such as alanine and cysteine, to avoid such errors it has two additional distinct editing activities against alanine. One activity is designated as 'pretransfer' editing and involves the tRNA(Pro)-independent hydrolysis of activated Ala-AMP. The other activity is designated 'posttransfer' editing and involves deacylation of mischarged Ala-tRNA(Pro). The misacylated Cys-tRNA(Pro) is not edited by ProRS. This chain is Proline--tRNA ligase, found in Prochlorococcus marinus (strain MIT 9313).